The sequence spans 445 residues: Allantoinase (445 aa).

Residues histidine 63, histidine 65, lysine 150, histidine 186, histidine 238, and aspartate 311 each coordinate Zn(2+). An N6-carboxylysine modification is found at lysine 150.

The protein belongs to the metallo-dependent hydrolases superfamily. Allantoinase family. Homotetramer. Requires Zn(2+) as cofactor. Carboxylation allows a single lysine to coordinate two zinc ions.

It catalyses the reaction (S)-allantoin + H2O = allantoate + H(+). It functions in the pathway nitrogen metabolism; (S)-allantoin degradation; allantoate from (S)-allantoin: step 1/1. Functionally, catalyzes the conversion of allantoin (5-ureidohydantoin) to allantoic acid by hydrolytic cleavage of the five-member hydantoin ring. The polypeptide is Allantoinase (Streptomyces avermitilis (strain ATCC 31267 / DSM 46492 / JCM 5070 / NBRC 14893 / NCIMB 12804 / NRRL 8165 / MA-4680)).